Here is a 267-residue protein sequence, read N- to C-terminus: Cell division protein FtsQ (267 aa).

Residues 1 to 32 lie on the Cytoplasmic side of the membrane; it reads MRKKTSSNKKKQTKKTNNISLRRKLRLIYKKA. The helical transmembrane segment at 33–53 threads the bilayer; sequence ILGLKIALIIFVCLFVFTKYF. Residues 54-267 are Periplasmic-facing; that stretch reads AGIKTYLTTN…DKNKYYIEKY (214 aa). Residues 73-141 enclose the POTRA domain; sequence FKLENVIIEG…NTVYIKLFER (69 aa).

The protein belongs to the FtsQ/DivIB family. FtsQ subfamily.

The protein resides in the cell inner membrane. Functionally, essential cell division protein. This Rickettsia felis (strain ATCC VR-1525 / URRWXCal2) (Rickettsia azadi) protein is Cell division protein FtsQ.